The sequence spans 577 residues: 9-cis-epoxycarotenoid dioxygenase NCED6, chloroplastic (577 aa).

Residues 1–25 (MQHSLRSDLLPTKTSPRSHLLPQPK) are disordered. The Fe cation site is built by H276, H325, H390, and H563.

This sequence belongs to the carotenoid oxygenase family. The cofactor is Fe(2+). Expressed before fertilization in male and female gametophytes, and then immediately after pollination, restricted to seed endosperm.

It is found in the plastid. It localises to the chloroplast stroma. The catalysed reaction is a 9-cis-epoxycarotenoid + O2 = a 12'-apo-carotenal + 2-cis,4-trans-xanthoxin. It catalyses the reaction 9-cis-violaxanthin + O2 = (3S,5R,6S)-5,6-epoxy-3-hydroxy-5,6-dihydro-12'-apo-beta-caroten-12'-al + 2-cis,4-trans-xanthoxin. The enzyme catalyses 9'-cis-neoxanthin + O2 = (3S,5R,6R)-3,5-dihydroxy-6,7-didehydro-5,6-dihydro-12'-apo-beta-caroten-12'-al + 2-cis,4-trans-xanthoxin. Has a 11,12(11',12') 9-cis epoxycarotenoid cleavage activity. Catalyzes the first step of abscisic-acid biosynthesis from carotenoids. Contributes probably to abscisic acid synthesis for the induction of seed dormancy. The chain is 9-cis-epoxycarotenoid dioxygenase NCED6, chloroplastic (NCED6) from Arabidopsis thaliana (Mouse-ear cress).